Consider the following 680-residue polypeptide: Probable oxidoreductase YoaE (680 aa).

The 4Fe-4S Mo/W bis-MGD-type domain maps to Asn9–Lys66. Cys16, Cys20, Cys24, and Cys52 together coordinate [4Fe-4S] cluster.

It belongs to the prokaryotic molybdopterin-containing oxidoreductase family. Requires Mo-bis(molybdopterin guanine dinucleotide) as cofactor.

The sequence is that of Probable oxidoreductase YoaE (yoaE) from Bacillus subtilis (strain 168).